Reading from the N-terminus, the 646-residue chain is MTNNQTDRPRPPGPESRRFDNNDKNNRNRWGPIPSWAWIVLIVALLLNWLVAPILFPEGKGAVSIPYTSFKQQLENNNVAEVTTQADKITGEFKQAVKVPGVDQPVKRFVTHIPAFGDDQLMSQLDQKGVIVNVQPESSTRSLLLSILISFGPTILFFLLFLWLISKAQSSQQGLFGLGKSRAKRYNATESTRVTFDDVAGIEEAKQELAEIVDFLKNPQKYQRLGGTIPKGVLLIGPPGTGKTLLARAVAGEAGVPFFSMSGSEFVEMIVGVGAARVRELFQQAKKEAPCIIFVDELDAIGRRRGSSINVGGHDEREQTLNQLLVEMDGFDSRQGVIVLAATNRPDVLDPALLRPGRFDRRVVVQRPDKVGRLKILQVHTRNVPLDPNLDLSEIAAATPGLVGADLRNLVNEAALLAARRGKNYVDREDFFDALEKITLGAERKLLISEEDRRRVAYHESGHALLGLLLPEADPVHKVTIIPRGQALGVTYQTPEDDRYNYTERYLRSRITAALGGRAAEELVFGTVTTGAENDLKQVTEIARQMVTRWGMSKEVGLVYLSPDGQEDFLGPNPITSREYSESLATVIDRETRRIIDECYAEALSLLNRERQRLDNLAEALLREESLDEQQIREIVGLGEKQPEPA.

A disordered region spans residues 1–27; that stretch reads MTNNQTDRPRPPGPESRRFDNNDKNNR. Residues 1-35 lie on the Cytoplasmic side of the membrane; the sequence is MTNNQTDRPRPPGPESRRFDNNDKNNRNRWGPIPS. Over residues 7-26 the composition is skewed to basic and acidic residues; sequence DRPRPPGPESRRFDNNDKNN. Residues 36-56 form a helical membrane-spanning segment; it reads WAWIVLIVALLLNWLVAPILF. Over 57-144 the chain is Extracellular; sequence PEGKGAVSIP…QPESSTRSLL (88 aa). The chain crosses the membrane as a helical span at residues 145–165; sequence LSILISFGPTILFFLLFLWLI. Residues 166–646 lie on the Cytoplasmic side of the membrane; sequence SKAQSSQQGL…GLGEKQPEPA (481 aa). Residue 237–244 participates in ATP binding; the sequence is GPPGTGKT. His-459 contributes to the Zn(2+) binding site. Glu-460 is a catalytic residue. Zn(2+)-binding residues include His-463 and Asp-535.

It in the central section; belongs to the AAA ATPase family. This sequence in the C-terminal section; belongs to the peptidase M41 family. In terms of assembly, homohexamer. The cofactor is Zn(2+).

Its subcellular location is the cell membrane. Functionally, acts as a processive, ATP-dependent zinc metallopeptidase for both cytoplasmic and membrane proteins. Plays a role in the quality control of integral membrane proteins. The sequence is that of ATP-dependent zinc metalloprotease FtsH from Thermobaculum terrenum (strain ATCC BAA-798 / CCMEE 7001 / YNP1).